The sequence spans 149 residues: Flagellar assembly factor FliW (149 aa).

This sequence belongs to the FliW family. In terms of assembly, interacts with translational regulator CsrA and flagellin(s).

Its subcellular location is the cytoplasm. In terms of biological role, acts as an anti-CsrA protein, binds CsrA and prevents it from repressing translation of its target genes, one of which is flagellin. Binds to flagellin and participates in the assembly of the flagellum. This Thermotoga maritima (strain ATCC 43589 / DSM 3109 / JCM 10099 / NBRC 100826 / MSB8) protein is Flagellar assembly factor FliW.